Here is a 303-residue protein sequence, read N- to C-terminus: Probable cat1 operon transcriptional activator (303 aa).

Residues Met1–Thr58 enclose the HTH lysR-type domain. Residues Phe18–Gln37 constitute a DNA-binding region (H-T-H motif).

The protein belongs to the LysR transcriptional regulatory family.

Its function is as follows. Probable positive regulator of the cat1 operon which encode enzymes responsible for the degradation of catechol to acetyl-CoA via the beta-ketoadipate pathway. This chain is Probable cat1 operon transcriptional activator, found in Acinetobacter lwoffii.